The primary structure comprises 185 residues: Large ribosomal subunit protein uL22 (185 aa).

Belongs to the universal ribosomal protein uL22 family. In terms of assembly, part of the 50S ribosomal subunit.

Functionally, this protein binds specifically to 23S rRNA. It makes multiple contacts with different domains of the 23S rRNA in the assembled 50S subunit and ribosome. The globular domain of the protein is located near the polypeptide exit tunnel on the outside of the subunit, while an extended beta-hairpin is found that lines the wall of the exit tunnel in the center of the 70S ribosome. The polypeptide is Large ribosomal subunit protein uL22 (Pyrobaculum aerophilum (strain ATCC 51768 / DSM 7523 / JCM 9630 / CIP 104966 / NBRC 100827 / IM2)).